The chain runs to 47 residues: Lysis protein for colicins E2 and E3 (47 aa).

The first 19 residues, 1–19 (MKKITGIILLLLAVIILSA), serve as a signal peptide directing secretion. Residue C20 is the site of N-palmitoyl cysteine attachment. A lipid anchor (S-diacylglycerol cysteine) is attached at C20.

It localises to the cell outer membrane. Functionally, lysis proteins are required for both colicin release and partial cell lysis. In Escherichia coli, this protein is Lysis protein for colicins E2 and E3 (hic).